A 72-amino-acid chain; its full sequence is Probable neurotoxin pcD-996 (72 aa).

An N-terminal signal peptide occupies residues M1–S19. In terms of domain architecture, LCN-type CS-alpha/beta spans R21–R72. 3 cysteine pairs are disulfide-bonded: C35–C56, C42–C66, and C46–C68. Residue R72 is a propeptide, removed by a carboxypeptidase.

This sequence belongs to the long (3 C-C) scorpion toxin superfamily. Expressed by the venom gland.

It is found in the secreted. The sequence is that of Probable neurotoxin pcD-996 from Androctonus australis (Sahara scorpion).